The chain runs to 299 residues: Oxygen-dependent coproporphyrinogen-III oxidase (299 aa).

Ser-92 lines the substrate pocket. A divalent metal cation-binding residues include His-96 and His-106. His-106 (proton donor) is an active-site residue. 108-110 (NVR) lines the substrate pocket. A divalent metal cation contacts are provided by His-145 and His-175. Residues 239–274 (YVEFNLVYDRGTLFGLQSGGRAESILMSLPPRVRWE) form an important for dimerization region. 257–259 (GGR) is a substrate binding site.

Belongs to the aerobic coproporphyrinogen-III oxidase family. In terms of assembly, homodimer. Requires a divalent metal cation as cofactor.

Its subcellular location is the cytoplasm. It catalyses the reaction coproporphyrinogen III + O2 + 2 H(+) = protoporphyrinogen IX + 2 CO2 + 2 H2O. The protein operates within porphyrin-containing compound metabolism; protoporphyrin-IX biosynthesis; protoporphyrinogen-IX from coproporphyrinogen-III (O2 route): step 1/1. Its function is as follows. Involved in the heme biosynthesis. Catalyzes the aerobic oxidative decarboxylation of propionate groups of rings A and B of coproporphyrinogen-III to yield the vinyl groups in protoporphyrinogen-IX. The chain is Oxygen-dependent coproporphyrinogen-III oxidase from Xanthomonas axonopodis pv. citri (strain 306).